We begin with the raw amino-acid sequence, 387 residues long: 3-ketoacyl-CoA thiolase (387 aa).

The active-site Acyl-thioester intermediate is the Cys91. Catalysis depends on proton acceptor residues His343 and Cys373.

It belongs to the thiolase-like superfamily. Thiolase family. As to quaternary structure, heterotetramer of two alpha chains (FadB) and two beta chains (FadA).

It localises to the cytoplasm. The catalysed reaction is an acyl-CoA + acetyl-CoA = a 3-oxoacyl-CoA + CoA. It functions in the pathway lipid metabolism; fatty acid beta-oxidation. In terms of biological role, catalyzes the final step of fatty acid oxidation in which acetyl-CoA is released and the CoA ester of a fatty acid two carbons shorter is formed. This chain is 3-ketoacyl-CoA thiolase, found in Shewanella sp. (strain ANA-3).